Reading from the N-terminus, the 434-residue chain is Histidinol dehydrogenase (434 aa).

Residues tyrosine 130, glutamine 191, and asparagine 214 each coordinate NAD(+). Residues serine 237, glutamine 259, and histidine 262 each contribute to the substrate site. Zn(2+) contacts are provided by glutamine 259 and histidine 262. Catalysis depends on proton acceptor residues glutamate 327 and histidine 328. Residues histidine 328, aspartate 361, glutamate 415, and histidine 420 each coordinate substrate. Aspartate 361 provides a ligand contact to Zn(2+). Histidine 420 lines the Zn(2+) pocket.

It belongs to the histidinol dehydrogenase family. Requires Zn(2+) as cofactor.

The catalysed reaction is L-histidinol + 2 NAD(+) + H2O = L-histidine + 2 NADH + 3 H(+). It participates in amino-acid biosynthesis; L-histidine biosynthesis; L-histidine from 5-phospho-alpha-D-ribose 1-diphosphate: step 9/9. In terms of biological role, catalyzes the sequential NAD-dependent oxidations of L-histidinol to L-histidinaldehyde and then to L-histidine. In Chromobacterium violaceum (strain ATCC 12472 / DSM 30191 / JCM 1249 / CCUG 213 / NBRC 12614 / NCIMB 9131 / NCTC 9757 / MK), this protein is Histidinol dehydrogenase.